The sequence spans 831 residues: Translation initiation factor IF-2 (831 aa).

The tr-type G domain maps to 329 to 499 (TRAPVVTVMG…LLISEMQDLK (171 aa)). Positions 338-345 (GHVDHGKT) are G1. GTP is bound at residue 338 to 345 (GHVDHGKT). The segment at 363–367 (GITQH) is G2. The G3 stretch occupies residues 385-388 (DTPG). GTP is bound by residues 385–389 (DTPGH) and 439–442 (NKID). The interval 439 to 442 (NKID) is G4. Residues 475–477 (SAL) are G5.

Belongs to the TRAFAC class translation factor GTPase superfamily. Classic translation factor GTPase family. IF-2 subfamily.

It localises to the cytoplasm. In terms of biological role, one of the essential components for the initiation of protein synthesis. Protects formylmethionyl-tRNA from spontaneous hydrolysis and promotes its binding to the 30S ribosomal subunits. Also involved in the hydrolysis of GTP during the formation of the 70S ribosomal complex. The polypeptide is Translation initiation factor IF-2 (Rickettsia typhi (strain ATCC VR-144 / Wilmington)).